The sequence spans 141 residues: Eukaryotic translation initiation factor 1A (141 aa).

Basic residues predominate over residues 1–15 (MPKNKGKGGKNRRRG). Positions 1 to 28 (MPKNKGKGGKNRRRGKNENEQKRELQFK) are disordered. Basic and acidic residues predominate over residues 16–28 (KNENEQKRELQFK). Residues 21-95 (QKRELQFKEE…DKADVILRYN (75 aa)) enclose the S1-like domain.

This sequence belongs to the eIF-1A family.

Its function is as follows. Seems to be required for maximal rate of protein biosynthesis. Enhances ribosome dissociation into subunits and stabilizes the binding of the initiator Met-tRNA(I) to 40 S ribosomal subunits. This is Eukaryotic translation initiation factor 1A (eif1a) from Dictyostelium discoideum (Social amoeba).